We begin with the raw amino-acid sequence, 23 residues long: Potassium channel toxin alpha-KTx 13.1 (23 aa).

3 disulfide bridges follow: Cys-2–Cys-15, Cys-5–Cys-20, and Cys-9–Cys-22. Residues 13–20 are interaction with Ca(2+)-activated K(+) channels; that stretch reads GKCINGRC.

Expressed by the venom gland.

The protein resides in the secreted. Functionally, blocks reversibly Shaker B potassium channels. Also displaces binding of noxiustoxin to mouse brain synaptosome membranes. The sequence is that of Potassium channel toxin alpha-KTx 13.1 from Tityus obscurus (Amazonian scorpion).